Consider the following 212-residue polypeptide: Transmembrane emp24 domain-containing protein p24delta4 (212 aa).

The signal sequence occupies residues M1 to A25. Residues V26–R179 lie on the Lumenal side of the membrane. Positions S35 to K147 constitute a GOLD domain. A glycan (N-linked (GlcNAc...) asparagine) is linked at N82. Residues A133–I155 adopt a coiled-coil conformation. Omega-N-methylated arginine occurs at positions 165 and 170. Residues V180–L200 traverse the membrane as a helical segment. Over Y201–I212 the chain is Cytoplasmic. The COPII vesicle coat-binding motif lies at Y205–F206. A COPI vesicle coat-binding motif is present at residues Y205 to I212.

Belongs to the EMP24/GP25L family. As to quaternary structure, probably oligomerizes with other members of the EMP24/GP25L family. Associates with the COPI vesicle coat (coatomer). Associates with the COPII vesicle coat (coatomer).

The protein localises to the endoplasmic reticulum membrane. It is found in the golgi apparatus membrane. Its function is as follows. Involved in vesicular protein trafficking. Mainly functions in the early secretory pathway. Required for trafficking GLL23, a component of the PYK10 complex. May act as a receptor facilitating its packing into COPII carriers and export from the endoplasmic reticulum. This chain is Transmembrane emp24 domain-containing protein p24delta4 (CYB), found in Arabidopsis thaliana (Mouse-ear cress).